A 415-amino-acid chain; its full sequence is Erythronolide mycarosyltransferase (415 aa).

The protein belongs to the glycosyltransferase 28 family.

The enzyme catalyses dTDP-beta-L-mycarose + erythronolide B = 3-O-alpha-L-mycarosylerythronolide B + dTDP + H(+). Involved in the biosynthesis of the macrolide antibiotic erythromycin. Catalyzes the reversible transfer of mycarosyl from dTDP-beta-L-mycarose to erythronolide B to yield 3-alpha-L-mycarosylerythronolide B. It can also use TDP-beta-L-cladinose. This Saccharopolyspora erythraea (Streptomyces erythraeus) protein is Erythronolide mycarosyltransferase.